Here is a 530-residue protein sequence, read N- to C-terminus: MQEIQFIVPAALHDEMLRLRNEKQMDFLESLTGMDWGVADEKDAPEKLRGLGVVYHLESTVTGERIALKTAVTDRERPEIPSVSDIWKIADFYEREVFDYYGIVFVGHPDMRRLYLRNDWVGYPMRKDNDPEKDNPLCMANEETFDTTQEIELNPDGTIKNREMKLFGEEEYVVNIGPQHPATHGVMRFRVSLEGEIIRKIDANCGYIHRGIEKMNESLTYPQTLALTDRLDYLGAHQNRHALCMCIEKAMGIEVSDRVKYIRTIMDELQRIDSHLLFYSALAMDLGALTAFFYGFRDREKILDIFEETCGGRLIMNYNTIGGVQADLHPNFVKRVKEFIPYMRGIIHEYHDIFTGNIIAQSRMKGVGVLSREDAISFGCTGGTGRASGWACDVRKRIPYGVYDKVDFQEIVYTEGDCFARYLVRMDEIMESLKIIEQLIDNIPEGPYQEKMKPIIRVPEGSYYAAVEGSRGEFGVFLESQGDKMPYRLHYRATGLPLVAAIDTICRGAKIADLIAIGGTLDYVVPDIDR.

The segment at 1–144 is NADH dehydrogenase I subunit C; that stretch reads MQEIQFIVPA…NPLCMANEET (144 aa). The interval 171-530 is NADH dehydrogenase I subunit D; it reads EYVVNIGPQH…LDYVVPDIDR (360 aa).

This sequence in the N-terminal section; belongs to the complex I 30 kDa subunit family. It in the C-terminal section; belongs to the complex I 49 kDa subunit family. NDH-1 is composed of 13 different subunits. Subunits NuoB, CD, E, F, and G constitute the peripheral sector of the complex.

It is found in the cell inner membrane. The catalysed reaction is a quinone + NADH + 5 H(+)(in) = a quinol + NAD(+) + 4 H(+)(out). Its function is as follows. NDH-1 shuttles electrons from NADH, via FMN and iron-sulfur (Fe-S) centers, to quinones in the respiratory chain. The immediate electron acceptor for the enzyme in this species is believed to be a menaquinone. Couples the redox reaction to proton translocation (for every two electrons transferred, four hydrogen ions are translocated across the cytoplasmic membrane), and thus conserves the redox energy in a proton gradient. The protein is NADH-quinone oxidoreductase subunit C/D of Bacteroides thetaiotaomicron (strain ATCC 29148 / DSM 2079 / JCM 5827 / CCUG 10774 / NCTC 10582 / VPI-5482 / E50).